The following is a 592-amino-acid chain: Glutamine-rich protein 2 (592 aa).

Positions 488-592 (QLQQAQHARP…TRGPRSTAAH (105 aa)) are disordered. The segment covering 544–567 (LQSNVSHSSIPTDIASLQGSQQGL) has biased composition (polar residues).

Interacts with AKAP3, ODF2 and TSSK4. Interacts with AKAP4. In terms of tissue distribution, expressed in testis. Not detected in heart, brain, kidney, stomach, ovary, liver, lung and uterus.

The protein resides in the nucleus membrane. It is found in the nucleus. The protein localises to the cytoplasm. It localises to the cell projection. Its subcellular location is the cilium. The protein resides in the flagellum. Its function is as follows. Has an essential role in the formation of sperm flagella and flagellar structure maintainance. It acts as a suppressor of ubiquitination and degradation of proteins involved in flagellar development and motility. This is Glutamine-rich protein 2 from Mus musculus (Mouse).